The following is a 203-amino-acid chain: Holliday junction branch migration complex subunit RuvA (203 aa).

The domain I stretch occupies residues 1–62 (MYEYFLGQVT…ENGMSLFGFF (62 aa)). The segment at 63–141 (DADEKALFEK…DLNVDVTGQT (79 aa)) is domain II. The tract at residues 142-148 (ALDVDAP) is flexible linker. Positions 149–203 (AVDGALADALAALEALGYSKADVKKVTKKLETFSQTQGADTNTLLSEGLRLLMKK) are domain III.

This sequence belongs to the RuvA family. As to quaternary structure, homotetramer. Forms an RuvA(8)-RuvB(12)-Holliday junction (HJ) complex. HJ DNA is sandwiched between 2 RuvA tetramers; dsDNA enters through RuvA and exits via RuvB. An RuvB hexamer assembles on each DNA strand where it exits the tetramer. Each RuvB hexamer is contacted by two RuvA subunits (via domain III) on 2 adjacent RuvB subunits; this complex drives branch migration. In the full resolvosome a probable DNA-RuvA(4)-RuvB(12)-RuvC(2) complex forms which resolves the HJ.

It localises to the cytoplasm. Functionally, the RuvA-RuvB-RuvC complex processes Holliday junction (HJ) DNA during genetic recombination and DNA repair, while the RuvA-RuvB complex plays an important role in the rescue of blocked DNA replication forks via replication fork reversal (RFR). RuvA specifically binds to HJ cruciform DNA, conferring on it an open structure. The RuvB hexamer acts as an ATP-dependent pump, pulling dsDNA into and through the RuvAB complex. HJ branch migration allows RuvC to scan DNA until it finds its consensus sequence, where it cleaves and resolves the cruciform DNA. This chain is Holliday junction branch migration complex subunit RuvA, found in Lactiplantibacillus plantarum (strain ATCC BAA-793 / NCIMB 8826 / WCFS1) (Lactobacillus plantarum).